We begin with the raw amino-acid sequence, 637 residues long: ATP-dependent zinc metalloprotease FtsH (637 aa).

The Cytoplasmic portion of the chain corresponds to 1–7; the sequence is MNRVFRN. A helical transmembrane segment spans residues 8-28; it reads TIFYLLILLVVIGVVSYFQTS. Residues 29 to 109 lie on the Extracellular side of the membrane; sequence NPKTENMSYS…VEPAQETSGW (81 aa). Residues 110 to 130 traverse the membrane as a helical segment; sequence VTFLTTIIPFVIIFILFFFLL. The Cytoplasmic segment spans residues 131-637; it reads NQAQGGGSRV…TEEKKDDTKE (507 aa). 201 to 208 lines the ATP pocket; the sequence is GPPGTGKT. Zn(2+) is bound at residue His423. Glu424 is a catalytic residue. Residues His427 and Asp499 each contribute to the Zn(2+) site. The interval 514 to 637 is not necessary for FtsH function; the sequence is FGMSEKLGPL…TEEKKDDTKE (124 aa).

This sequence in the central section; belongs to the AAA ATPase family. The protein in the C-terminal section; belongs to the peptidase M41 family. Homohexamer. Interacts with FloT at midcell. Interacts with FloA at midcell. Another study shows only minor colocalization with FloA or FloT. The cofactor is Zn(2+).

The protein localises to the cell membrane. It is found in the membrane raft. Functionally, acts as a processive, ATP-dependent zinc metallopeptidase for both cytoplasmic and membrane proteins. Plays a role in the quality control of integral membrane proteins. In vitro partially degrades Spo0E, the phosphatase that acts on Spo0A-P. Recognition requires the last 14 residues of Spo0E. Its stabile accumulation requires FlotA and Flot. May degrade EzrA. This is ATP-dependent zinc metalloprotease FtsH from Bacillus subtilis (strain 168).